A 963-amino-acid chain; its full sequence is Unconventional myosin-XIX (963 aa).

The region spanning 35–758 (HQLDDLTKVN…MLELLECGRA (724 aa)) is the Myosin motor domain. 132-139 (GESGAGKT) serves as a coordination point for ATP. The segment at 602 to 624 (LEQLLQVLHNTTPHYIRCIKPNS) is actin-binding. 2 consecutive IQ domains span residues 762-782 (EQCARCIQCGWRRHRLQKQEK) and 783-812 (QRRAAVLIQAAFRSWLTRKHIRRLHIAATV). The segment at 829-963 (SKELDGMEEK…LLESHRPVQV (135 aa)) is myMOMA region.

It belongs to the TRAFAC class myosin-kinesin ATPase superfamily. Myosin family. As to quaternary structure, myosin is a hexamer of 2 heavy chains and 4 light chains: interacts with myosin light chains MYL9 and MYL12B.

The protein localises to the mitochondrion outer membrane. It localises to the cytoplasm. Its subcellular location is the cytoskeleton. Its function is as follows. Actin-based motor molecule with ATPase activity that localizes to the mitochondrion outer membrane. Motor protein that moves towards the plus-end of actin filaments. Required for mitochondrial inheritance during mitosis. May be involved in mitochondrial transport or positioning. This is Unconventional myosin-XIX from Mus musculus (Mouse).